Here is a 38-residue protein sequence, read N- to C-terminus: Photosystem II reaction center protein L (38 aa).

Residues 17 to 37 traverse the membrane as a helical segment; that stretch reads SLYWGLLLIFVLAVLFSNYFF.

It belongs to the PsbL family. In terms of assembly, PSII is composed of 1 copy each of membrane proteins PsbA, PsbB, PsbC, PsbD, PsbE, PsbF, PsbH, PsbI, PsbJ, PsbK, PsbL, PsbM, PsbT, PsbX, PsbY, PsbZ, Psb30/Ycf12, at least 3 peripheral proteins of the oxygen-evolving complex and a large number of cofactors. It forms dimeric complexes.

It is found in the plastid. The protein localises to the chloroplast thylakoid membrane. In terms of biological role, one of the components of the core complex of photosystem II (PSII). PSII is a light-driven water:plastoquinone oxidoreductase that uses light energy to abstract electrons from H(2)O, generating O(2) and a proton gradient subsequently used for ATP formation. It consists of a core antenna complex that captures photons, and an electron transfer chain that converts photonic excitation into a charge separation. This subunit is found at the monomer-monomer interface and is required for correct PSII assembly and/or dimerization. The protein is Photosystem II reaction center protein L of Angiopteris evecta (Mule's foot fern).